Reading from the N-terminus, the 879-residue chain is Alanine--tRNA ligase (879 aa).

The Zn(2+) site is built by His566, His570, Cys668, and His672.

It belongs to the class-II aminoacyl-tRNA synthetase family. It depends on Zn(2+) as a cofactor.

The protein resides in the cytoplasm. It carries out the reaction tRNA(Ala) + L-alanine + ATP = L-alanyl-tRNA(Ala) + AMP + diphosphate. Catalyzes the attachment of alanine to tRNA(Ala) in a two-step reaction: alanine is first activated by ATP to form Ala-AMP and then transferred to the acceptor end of tRNA(Ala). Also edits incorrectly charged Ser-tRNA(Ala) and Gly-tRNA(Ala) via its editing domain. This chain is Alanine--tRNA ligase, found in Clostridium kluyveri (strain ATCC 8527 / DSM 555 / NBRC 12016 / NCIMB 10680 / K1).